A 177-amino-acid chain; its full sequence is MNIIQQLEAEQAAKIAAKRTLPEFSPGDTVRVNVRVVEGNRTRVQAYEGVCIARSGGGINESFTVRKISYGEGVERVFPVYSPLVESVDVVRRGKVRRAKLYYLRDRRGKSARIVENTGTRARKLNDAERQAVVEEKARIEAEKVAAAQALAAEKAAAEAAEAKAAEEAKAAEAAAE.

Belongs to the bacterial ribosomal protein bL19 family.

In terms of biological role, this protein is located at the 30S-50S ribosomal subunit interface and may play a role in the structure and function of the aminoacyl-tRNA binding site. This chain is Large ribosomal subunit protein bL19, found in Rhizobium meliloti (strain 1021) (Ensifer meliloti).